A 62-amino-acid chain; its full sequence is Photosystem II reaction center protein Z (62 aa).

Helical transmembrane passes span 8–28 (ALFALIATSFLLVVGVPVAFA) and 41–61 (FSGASLWIGLVFLVGIPNSFI).

This sequence belongs to the PsbZ family. As to quaternary structure, PSII is composed of 1 copy each of membrane proteins PsbA, PsbB, PsbC, PsbD, PsbE, PsbF, PsbH, PsbI, PsbJ, PsbK, PsbL, PsbM, PsbT, PsbY, PsbZ, Psb30/Ycf12, at least 3 peripheral proteins of the oxygen-evolving complex and a large number of cofactors. It forms dimeric complexes.

The protein localises to the plastid. Its subcellular location is the chloroplast thylakoid membrane. Its function is as follows. May control the interaction of photosystem II (PSII) cores with the light-harvesting antenna, regulates electron flow through the 2 photosystem reaction centers. PSII is a light-driven water plastoquinone oxidoreductase, using light energy to abstract electrons from H(2)O, generating a proton gradient subsequently used for ATP formation. This is Photosystem II reaction center protein Z from Adiantum capillus-veneris (Maidenhair fern).